The chain runs to 273 residues: Cilia- and flagella-associated protein 298-B (273 aa).

Belongs to the CFAP298 family.

It localises to the cytoplasm. It is found in the cytoskeleton. Its subcellular location is the cilium basal body. In terms of biological role, plays a role in motile cilium function, possibly by acting on outer dynein arm assembly. Seems to be important for initiation rather than maintenance of cilium motility. Required for correct positioning of the cilium at the apical cell surface, suggesting an additional role in the planar cell polarity (PCP) pathway. May suppress canonical Wnt signaling activity. The protein is Cilia- and flagella-associated protein 298-B (cfap298-b) of Xenopus laevis (African clawed frog).